A 287-amino-acid chain; its full sequence is Large ribosomal subunit protein uL2 (287 aa).

Positions 221-287 (RGSVMNPCDH…SKRSRGGRDS (67 aa)) are disordered. Residues 258–287 (KTRKRNKPSNKFVLRKRRKTSKRSRGGRDS) are compositionally biased toward basic residues.

Belongs to the universal ribosomal protein uL2 family. Part of the 50S ribosomal subunit. Forms a bridge to the 30S subunit in the 70S ribosome.

Functionally, one of the primary rRNA binding proteins. Required for association of the 30S and 50S subunits to form the 70S ribosome, for tRNA binding and peptide bond formation. It has been suggested to have peptidyltransferase activity; this is somewhat controversial. Makes several contacts with the 16S rRNA in the 70S ribosome. This Synechococcus sp. (strain CC9311) protein is Large ribosomal subunit protein uL2.